Here is a 347-residue protein sequence, read N- to C-terminus: Olfactory receptor 1L6 (347 aa).

At 1-62 (MSYFYRLKLM…GLSSNPQLQK (62 aa)) the chain is on the extracellular side. A glycan (N-linked (GlcNAc...) asparagine) is linked at Asn41. A helical transmembrane segment spans residues 63 to 86 (PLFAIFLIMYLLAAVGNVLIIPAI). Residues 87 to 94 (YSDPRLHT) lie on the Cytoplasmic side of the membrane. A helical transmembrane segment spans residues 95 to 116 (PMYFFLSNLSFMDICFTTVIVP). The Extracellular segment spans residues 117–137 (KMLVNFLSETKVISYVGCLAQ). A disulfide bond links Cys134 and Cys226. Residues 138-157 (MYFFMAFGNTDSYLLASMAI) traverse the membrane as a helical segment. Over 158–176 (DRLVAICNPLHYDVVMKPR) the chain is Cytoplasmic. The chain crosses the membrane as a helical span at residues 177–195 (HCLLMLLGSCSISHLHSLF). The Extracellular portion of the chain corresponds to 196–233 (RVLLMSRLSFCASHIIKHFFCDTQPVLKLSCSDTSSSQ). The helical transmembrane segment at 234–256 (MVVMTETLAVIVTPFLCIIFSYL) threads the bilayer. The Cytoplasmic portion of the chain corresponds to 257–273 (RIMVTVLRIPSAAGKWK). The chain crosses the membrane as a helical span at residues 274–296 (AFSTCGSHLTAVALFYGSIIYVY). The Extracellular segment spans residues 297 to 309 (FRPLSMYSVVRDR). Residues 310–329 (VATVMYTVVTPMLNPFIYSL) form a helical membrane-spanning segment. Over 330 to 347 (RNKDMKRGLKKLQDRIYR) the chain is Cytoplasmic.

This sequence belongs to the G-protein coupled receptor 1 family.

Its subcellular location is the cell membrane. Odorant receptor. The polypeptide is Olfactory receptor 1L6 (OR1L6) (Homo sapiens (Human)).